The sequence spans 432 residues: Phosphomethylpyrimidine synthase (432 aa).

Substrate is bound by residues Asn-66, Met-95, Tyr-124, His-163, 185–187, 226–229, and Glu-265; these read SRG and DGLR. His-269 is a binding site for Zn(2+). Substrate is bound at residue Tyr-292. His-333 contacts Zn(2+). Residues Cys-409, Cys-412, and Cys-416 each coordinate [4Fe-4S] cluster.

The protein belongs to the ThiC family. The cofactor is [4Fe-4S] cluster.

It carries out the reaction 5-amino-1-(5-phospho-beta-D-ribosyl)imidazole + S-adenosyl-L-methionine = 4-amino-2-methyl-5-(phosphooxymethyl)pyrimidine + CO + 5'-deoxyadenosine + formate + L-methionine + 3 H(+). Its pathway is cofactor biosynthesis; thiamine diphosphate biosynthesis. Its function is as follows. Catalyzes the synthesis of the hydroxymethylpyrimidine phosphate (HMP-P) moiety of thiamine from aminoimidazole ribotide (AIR) in a radical S-adenosyl-L-methionine (SAM)-dependent reaction. The chain is Phosphomethylpyrimidine synthase from Desulforamulus reducens (strain ATCC BAA-1160 / DSM 100696 / MI-1) (Desulfotomaculum reducens).